Reading from the N-terminus, the 760-residue chain is MIMNMTTDYRDPLLDLFGTESNSGNETSSPSDIPVINRSGTFNQQQFSPLLTQQSLYNTPNSGSTPNIFDPNYTQMQEEQTSPSSNKLQPEDPPRKKRNTRSQTKIHQQSEGDEYNSNDYKDSIDLDKPPVVEPSPPFFVESDTTPEFVIPTPTSEQQQQQHHELIAQDYQRSNNSNQFGNLTHYEPNLPPLPPLSESILPQTNTFHPLVLPHDPRHAITAGPANNSQQQQQQQQQDSSIPSDGISSKIQQLHAPSLSNNQSASQRKKKESSGPKTRPAFVMKIWSMVNDPANHEYIRWNDDGKTFQVFHREDFMKVILPKYFKHNNFASFVRQLNMYGWHKVQDVANGTLNQNSDKNGQDEIWQFENPNFIKDREDLLDKIVRNKSSSNQDDVSGVSFNGINNSANLSLILQELETIKMNQYVISEDLRRVRQDNKMLWQENYLNRERNQVQGRTLDKILKFLSVVYGNNANKILNGHGFADFNDSNNIMTQYRPSPMGSPLLSRPQTQPPPSNSRFARDNNQTAQPTYESPLSTSDTNNNNNNTFEYQQAVNRPRLMLTNRAHSRRPSMSRTKSTPEGSIEEIIRSYSNDKAAESNVNRMYEQLVGHQPGATTNNNNHSSSTAISAPSPRHSFLQELNLPGTPRNLDDLEKHINKEGQSIQQVQDWIDKLAQEQHEKQQQQQGNDDDDDFDVNEFLKDATTTPSSNVPNGGHYNNGNISFVGSPIAMTPGSNVSSNINDSDGNEKKSKKRSIEEVSDH.

Disordered regions lie at residues 1–132 and 206–276; these read MIMN…PPVV and FHPL…GPKT. Composition is skewed to polar residues over residues 19 to 31 and 38 to 88; these read TESNSGNETSSPS and RSGT…SNKL. Over residues 119–130 the composition is skewed to basic and acidic residues; sequence DYKDSIDLDKPP. The segment covering 221–247 has biased composition (low complexity); it reads AGPANNSQQQQQQQQQDSSIPSDGISS. Residues 276-385 mediate DNA binding; sequence TRPAFVMKIW…EDLLDKIVRN (110 aa). The tract at residues 414-467 is involved in trimerization; the sequence is ELETIKMNQYVISEDLRRVRQDNKMLWQENYLNRERNQVQGRTLDKILKFLSVV. Disordered stretches follow at residues 492–545, 560–582, 609–630, and 674–760; these read TQYR…NNNN, LTNRAHSRRPSMSRTKSTPEGSI, HQPGATTNNNNHSSSTAISAPS, and QEQH…VSDH. Residues 515-539 show a composition bias toward polar residues; sequence NSRFARDNNQTAQPTYESPLSTSDT. Position 570 is a phosphoserine (S570). T574 carries the post-translational modification Phosphothreonine. Residue S576 is modified to Phosphoserine. At T577 the chain carries Phosphothreonine. Residues 613-628 are compositionally biased toward low complexity; the sequence is ATTNNNNHSSSTAISA. Residues 646 to 684 are a coiled coil; the sequence is RNLDDLEKHINKEGQSIQQVQDWIDKLAQEQHEKQQQQQ. 2 stretches are compositionally biased toward polar residues: residues 701–722 and 731–742; these read ATTTPSSNVPNGGHYNNGNISF and PGSNVSSNINDS. Residues 744 to 760 show a composition bias toward basic and acidic residues; that stretch reads GNEKKSKKRSIEEVSDH.

The protein belongs to the HSF family. As to quaternary structure, homotrimer. Homotrimerization increases the affinity of HSF1 to DNA. Interacts with HSP90. Post-translationally, activated by phosphorylation of at least Ser-570, Thr-574, Ser-576 and Thr-577 in response to heat shock. Additional unidentified residues are also phosphorylated in response to heat shock.

The protein resides in the nucleus. DNA-binding transcription factor that specifically binds heat shock promoter elements (HSE) and activates transcription. With HSP90, is required for the modulation of the chaperone levels in response to growth temperature, rather than the activation of acute responses to sudden thermal transitions. Activated during infection and contributes to full virulence. This Candida albicans (strain SC5314 / ATCC MYA-2876) (Yeast) protein is Heat shock transcription factor.